A 275-amino-acid polypeptide reads, in one-letter code: 4-diphosphocytidyl-2-C-methyl-D-erythritol kinase (275 aa).

The active site involves K14. 98 to 108 (PMGAGLGGGSS) contributes to the ATP binding site. The active site involves D140.

Belongs to the GHMP kinase family. IspE subfamily.

It carries out the reaction 4-CDP-2-C-methyl-D-erythritol + ATP = 4-CDP-2-C-methyl-D-erythritol 2-phosphate + ADP + H(+). Its pathway is isoprenoid biosynthesis; isopentenyl diphosphate biosynthesis via DXP pathway; isopentenyl diphosphate from 1-deoxy-D-xylulose 5-phosphate: step 3/6. Catalyzes the phosphorylation of the position 2 hydroxy group of 4-diphosphocytidyl-2C-methyl-D-erythritol. The sequence is that of 4-diphosphocytidyl-2-C-methyl-D-erythritol kinase from Francisella tularensis subsp. novicida (strain U112).